Here is a 173-residue protein sequence, read N- to C-terminus: Large ribosomal subunit protein uL10 (173 aa).

Belongs to the universal ribosomal protein uL10 family. In terms of assembly, part of the ribosomal stalk of the 50S ribosomal subunit. The N-terminus interacts with L11 and the large rRNA to form the base of the stalk. The C-terminus forms an elongated spine to which L12 dimers bind in a sequential fashion forming a multimeric L10(L12)X complex.

Forms part of the ribosomal stalk, playing a central role in the interaction of the ribosome with GTP-bound translation factors. The protein is Large ribosomal subunit protein uL10 of Nitratidesulfovibrio vulgaris (strain ATCC 29579 / DSM 644 / CCUG 34227 / NCIMB 8303 / VKM B-1760 / Hildenborough) (Desulfovibrio vulgaris).